Reading from the N-terminus, the 1021-residue chain is Translation initiation factor IF-2 (1021 aa).

Positions 50–422 (AFPAEGGSAS…RMGAMVPRGN (373 aa)) are disordered. The span at 57–71 (SASGGRPGGRPGPGN) shows a compositional bias: gly residues. The segment covering 75–95 (PAPPRPGLAPRPGPRPVPGRP) has biased composition (pro residues). The span at 96 to 112 (GPAARPGGPAAPSAPAA) shows a compositional bias: low complexity. Residues 113 to 129 (PSAPAPGAPAASPPASQ) show a composition bias toward pro residues. 3 stretches are compositionally biased toward low complexity: residues 130-159 (PRPI…ASGP), 167-178 (GGPAAPGRARPG), and 187-196 (SAPSAPSAGG). The span at 198–208 (RPGPRPGPRPS) shows a compositional bias: pro residues. The segment covering 219–233 (SAGPRQSAGQSGSGP) has biased composition (low complexity). Pro residues-rich tracts occupy residues 234-254 (ASPP…PRPG) and 262-273 (RPSPGSMPPRPG). Gly residues-rich tracts occupy residues 275-291 (RPGG…GSGG) and 306-389 (GAPG…GGRG). The span at 390-401 (RPGRQRKSKRAK) shows a compositional bias: basic residues. In terms of domain architecture, tr-type G spans 514–686 (IRPPVVTVMG…IILTADASLD (173 aa)). The segment at 523-530 (GHVDHGKT) is G1. 523-530 (GHVDHGKT) provides a ligand contact to GTP. A G2 region spans residues 548-552 (GITQH). The segment at 573–576 (DTPG) is G3. Residues 573-577 (DTPGH) and 627-630 (NKVD) each bind GTP. The interval 627–630 (NKVD) is G4. Positions 663–665 (SAR) are G5.

Belongs to the TRAFAC class translation factor GTPase superfamily. Classic translation factor GTPase family. IF-2 subfamily.

Its subcellular location is the cytoplasm. One of the essential components for the initiation of protein synthesis. Protects formylmethionyl-tRNA from spontaneous hydrolysis and promotes its binding to the 30S ribosomal subunits. Also involved in the hydrolysis of GTP during the formation of the 70S ribosomal complex. This chain is Translation initiation factor IF-2, found in Frankia alni (strain DSM 45986 / CECT 9034 / ACN14a).